Consider the following 457-residue polypeptide: Argininosuccinate lyase (457 aa).

This sequence belongs to the lyase 1 family. Argininosuccinate lyase subfamily.

The protein localises to the cytoplasm. The enzyme catalyses 2-(N(omega)-L-arginino)succinate = fumarate + L-arginine. Its pathway is amino-acid biosynthesis; L-arginine biosynthesis; L-arginine from L-ornithine and carbamoyl phosphate: step 3/3. The chain is Argininosuccinate lyase from Histophilus somni (strain 129Pt) (Haemophilus somnus).